The primary structure comprises 272 residues: CD40 ligand (272 aa).

Topologically, residues 1 to 23 (MNEAYSPAAPRPMGSTSPSTMKM) are cytoplasmic. A helical; Signal-anchor for type II membrane protein transmembrane segment spans residues 24 to 44 (FMCFLSVFMVVQTIGTVLFCL). Residues 45 to 272 (YLHMKMDKME…GNTYFGMFKL (228 aa)) are Extracellular-facing. N-linked (GlcNAc...) asparagine glycosylation is found at N124 and N146. The THD domain maps to 136–272 (IATHLAGVKS…GNTYFGMFKL (137 aa)). Cysteines 190 and 229 form a disulfide. A glycan (N-linked (GlcNAc...) asparagine) is linked at N251.

Belongs to the tumor necrosis factor family. As to quaternary structure, homotrimer. Interacts with CD28. CD40 ligand, soluble form: Exists as either a monomer or a homotrimer. Forms a ternary complex between CD40 and integrins for CD40-CD40LG signaling. In terms of processing, the soluble form derives from the membrane form by proteolytic processing.

Its subcellular location is the cell membrane. It is found in the cell surface. It localises to the secreted. Its function is as follows. Cytokine that acts as a ligand to CD40/TNFRSF5. Costimulates T-cell proliferation and cytokine production. Induces the activation of NF-kappa-B. Mediates B-cell proliferation in the absence of co-stimulus as well as IgE production in the presence of IL4. Involved in immunoglobulin class switching. Functionally, acts as a ligand for integrins, specifically ITGA5:ITGB1 and ITGAV:ITGB3; both integrins and the CD40 receptor are required for activation of CD40-CD40LG signaling, which have cell-type dependent effects, such as B-cell activation, NF-kappa-B signaling and anti-apoptotic signaling. In Gallus gallus (Chicken), this protein is CD40 ligand (CD40LG).